Reading from the N-terminus, the 553-residue chain is Ubiquitin carboxyl-terminal hydrolase 17-like protein 15 (553 aa).

The 296-residue stretch at 80-375 (AGLQNMGNTC…QAYVLFYIQK (296 aa)) folds into the USP domain. Cys89 acts as the Nucleophile in catalysis. Residue His334 is the Proton acceptor of the active site. Basic and acidic residues-rich tracts occupy residues 382–392 (SESVSRGREPR) and 398–413 (DTDR…RDHP). Disordered stretches follow at residues 382 to 413 (SESV…RDHP) and 491 to 524 (STTP…HSKR). Residues 496–505 (HQESMNTGTL) are compositionally biased toward polar residues. Residues 510–524 (GRARRSKGKNKHSKR) show a composition bias toward basic residues.

The protein belongs to the peptidase C19 family. USP17 subfamily.

The protein resides in the nucleus. The protein localises to the endoplasmic reticulum. It carries out the reaction Thiol-dependent hydrolysis of ester, thioester, amide, peptide and isopeptide bonds formed by the C-terminal Gly of ubiquitin (a 76-residue protein attached to proteins as an intracellular targeting signal).. In terms of biological role, deubiquitinating enzyme that removes conjugated ubiquitin from specific proteins to regulate different cellular processes that may include cell proliferation, progression through the cell cycle, apoptosis, cell migration, and the cellular response to viral infection. The polypeptide is Ubiquitin carboxyl-terminal hydrolase 17-like protein 15 (USP17L15) (Homo sapiens (Human)).